The primary structure comprises 519 residues: Chaperone SurA (519 aa).

The signal sequence occupies residues methionine 1 to alanine 31. Composition is skewed to low complexity over residues alanine 31–alanine 45 and proline 197–alanine 207. 2 disordered regions span residues alanine 31–serine 50 and asparagine 196–serine 221. In terms of domain architecture, PpiC 1 spans proline 223–aspartate 324. The disordered stretch occupies residues glycine 328–proline 361. In terms of domain architecture, PpiC 2 spans valine 364–glutamate 463.

The protein resides in the periplasm. It catalyses the reaction [protein]-peptidylproline (omega=180) = [protein]-peptidylproline (omega=0). In terms of biological role, chaperone involved in the correct folding and assembly of outer membrane proteins. Recognizes specific patterns of aromatic residues and the orientation of their side chains, which are found more frequently in integral outer membrane proteins. May act in both early periplasmic and late outer membrane-associated steps of protein maturation. This Bordetella bronchiseptica (strain ATCC BAA-588 / NCTC 13252 / RB50) (Alcaligenes bronchisepticus) protein is Chaperone SurA.